The following is a 719-amino-acid chain: Phosphoribosylformylglycinamidine synthase subunit PurL (719 aa).

His-47 is a catalytic residue. ATP-binding residues include Tyr-50 and Lys-89. Glu-91 contributes to the Mg(2+) binding site. Substrate-binding positions include 92–95 (SHNH) and Arg-114. Catalysis depends on His-93, which acts as the Proton acceptor. Asp-115 provides a ligand contact to Mg(2+). A substrate-binding site is contributed by Gln-238. Asp-266 serves as a coordination point for Mg(2+). Substrate is bound at residue 310-312 (ESQ). Residues Asp-488 and Gly-525 each contribute to the ATP site. Asn-526 serves as a coordination point for Mg(2+). Ser-528 lines the substrate pocket.

This sequence belongs to the FGAMS family. Monomer. Part of the FGAM synthase complex composed of 1 PurL, 1 PurQ and 2 PurS subunits.

It is found in the cytoplasm. It carries out the reaction N(2)-formyl-N(1)-(5-phospho-beta-D-ribosyl)glycinamide + L-glutamine + ATP + H2O = 2-formamido-N(1)-(5-O-phospho-beta-D-ribosyl)acetamidine + L-glutamate + ADP + phosphate + H(+). Its pathway is purine metabolism; IMP biosynthesis via de novo pathway; 5-amino-1-(5-phospho-D-ribosyl)imidazole from N(2)-formyl-N(1)-(5-phospho-D-ribosyl)glycinamide: step 1/2. Its function is as follows. Part of the phosphoribosylformylglycinamidine synthase complex involved in the purines biosynthetic pathway. Catalyzes the ATP-dependent conversion of formylglycinamide ribonucleotide (FGAR) and glutamine to yield formylglycinamidine ribonucleotide (FGAM) and glutamate. The FGAM synthase complex is composed of three subunits. PurQ produces an ammonia molecule by converting glutamine to glutamate. PurL transfers the ammonia molecule to FGAR to form FGAM in an ATP-dependent manner. PurS interacts with PurQ and PurL and is thought to assist in the transfer of the ammonia molecule from PurQ to PurL. The sequence is that of Phosphoribosylformylglycinamidine synthase subunit PurL from Jannaschia sp. (strain CCS1).